The chain runs to 668 residues: Ras guanine nucleotide exchange factor D (668 aa).

A Rho-GAP domain is found at 27–224 (KKLESIFGIA…LMVMDIDEFD (198 aa)). Positions 237–362 (GESIVKAATF…YFQTFFKPVI (126 aa)) constitute an N-terminal Ras-GEF domain. Residues 433–663 (GSNIIAQQIT…HSISHKLEPR (231 aa)) enclose the Ras-GEF domain.

In terms of biological role, promotes the exchange of Ras-bound GDP by GTP. The chain is Ras guanine nucleotide exchange factor D (gefD) from Dictyostelium discoideum (Social amoeba).